The sequence spans 500 residues: Probable cytosol aminopeptidase (500 aa).

Lysine 274 and aspartate 279 together coordinate Mn(2+). The active site involves lysine 286. 3 residues coordinate Mn(2+): aspartate 297, aspartate 356, and glutamate 358. Arginine 360 is an active-site residue.

This sequence belongs to the peptidase M17 family. Mn(2+) is required as a cofactor.

It is found in the cytoplasm. It carries out the reaction Release of an N-terminal amino acid, Xaa-|-Yaa-, in which Xaa is preferably Leu, but may be other amino acids including Pro although not Arg or Lys, and Yaa may be Pro. Amino acid amides and methyl esters are also readily hydrolyzed, but rates on arylamides are exceedingly low.. It catalyses the reaction Release of an N-terminal amino acid, preferentially leucine, but not glutamic or aspartic acids.. Its function is as follows. Presumably involved in the processing and regular turnover of intracellular proteins. Catalyzes the removal of unsubstituted N-terminal amino acids from various peptides. The sequence is that of Probable cytosol aminopeptidase from Saccharophagus degradans (strain 2-40 / ATCC 43961 / DSM 17024).